The primary structure comprises 292 residues: N-acetylneuraminate lyase (292 aa).

Aceneuramate contacts are provided by S46 and T47. The active-site Proton donor is Y135. The Schiff-base intermediate with substrate role is filled by K163. 5 residues coordinate aceneuramate: T165, G187, D189, E190, and S206.

Belongs to the DapA family. NanA subfamily. As to quaternary structure, homotetramer.

It is found in the cytoplasm. The catalysed reaction is aceneuramate = aldehydo-N-acetyl-D-mannosamine + pyruvate. It functions in the pathway amino-sugar metabolism; N-acetylneuraminate degradation; D-fructose 6-phosphate from N-acetylneuraminate: step 1/5. In terms of biological role, catalyzes the reversible aldol cleavage of N-acetylneuraminic acid (sialic acid; Neu5Ac) to form pyruvate and N-acetylmannosamine (ManNAc) via a Schiff base intermediate. The polypeptide is N-acetylneuraminate lyase (Lactiplantibacillus plantarum (strain ATCC BAA-793 / NCIMB 8826 / WCFS1) (Lactobacillus plantarum)).